The following is a 424-amino-acid chain: UPF0597 protein Sbal223_1296 (424 aa).

It belongs to the UPF0597 family.

The protein is UPF0597 protein Sbal223_1296 of Shewanella baltica (strain OS223).